A 227-amino-acid polypeptide reads, in one-letter code: Translation initiation factor 6 (227 aa).

It belongs to the eIF-6 family.

In terms of biological role, binds to the 50S ribosomal subunit and prevents its association with the 30S ribosomal subunit to form the 70S initiation complex. The polypeptide is Translation initiation factor 6 (Pyrococcus horikoshii (strain ATCC 700860 / DSM 12428 / JCM 9974 / NBRC 100139 / OT-3)).